Consider the following 357-residue polypeptide: Probable GTP 3',8-cyclase (357 aa).

In terms of domain architecture, Radical SAM core spans 5-234 (DFGRDVSGVR…DRRRYWVSSR (230 aa)). Residue Arg14 coordinates GTP. [4Fe-4S] cluster contacts are provided by Cys21 and Cys25. Residue Tyr27 coordinates S-adenosyl-L-methionine. Cys28 contacts [4Fe-4S] cluster. Residue Lys68 participates in GTP binding. Gly72 is an S-adenosyl-L-methionine binding site. Thr96 is a binding site for GTP. Residue Ser120 participates in S-adenosyl-L-methionine binding. Residue Lys157 participates in GTP binding. The disordered stretch occupies residues 232 to 256 (SSRDAGSTADDAAQSVTPDGGAHPD). [4Fe-4S] cluster is bound by residues Cys272 and Cys275. Position 277-279 (277-279 (RVR)) interacts with GTP. Cys289 is a [4Fe-4S] cluster binding site.

Belongs to the radical SAM superfamily. MoaA family. Requires [4Fe-4S] cluster as cofactor.

It carries out the reaction GTP + AH2 + S-adenosyl-L-methionine = (8S)-3',8-cyclo-7,8-dihydroguanosine 5'-triphosphate + 5'-deoxyadenosine + L-methionine + A + H(+). It participates in cofactor biosynthesis; molybdopterin biosynthesis. Catalyzes the cyclization of GTP to (8S)-3',8-cyclo-7,8-dihydroguanosine 5'-triphosphate. This chain is Probable GTP 3',8-cyclase, found in Halobacterium salinarum (strain ATCC 29341 / DSM 671 / R1).